Here is a 246-residue protein sequence, read N- to C-terminus: Transcription factor A, mitochondrial (246 aa).

A mitochondrion-targeting transit peptide spans 1–42; that stretch reads MALLRGVWGVLSALGKSGADLCAVCGSRLRSPFSFAYVPRWF. Residues 50 to 118 constitute a DNA-binding region (HMG box 1); sequence PKKPMTSYVR…VYKEEVNRIQ (69 aa). Phosphoserine; by PKA is present on residues S56 and S61. T122 bears the Phosphothreonine mark. Positions 155–219 form a DNA-binding region, HMG box 2; the sequence is PKRPRSAYNI…RYYNEMKSWE (65 aa). Position 160 is a phosphoserine; by PKA (S160). A phosphoserine mark is found at S193 and S195.

Monomer; binds DNA as a monomer. Homodimer. Component of the mitochondrial transcription initiation complex, composed at least of TFB2M, TFAM and POLRMT. In this complex TFAM recruits POLRMT to the promoter whereas TFB2M induces structural changes in POLRMT to enable promoter opening and trapping of the DNA non-template strand. Upon metabolic stress, forms a complex composed of FOXO3, SIRT3, TFAM and POLRMT. Interacts with TFB1M and TFB2M. Interacts with CLPX; this enhances DNA-binding. In terms of processing, phosphorylation by PKA within the HMG box 1 impairs DNA binding and promotes degradation by the AAA+ Lon protease.

The protein localises to the mitochondrion. It is found in the mitochondrion matrix. Its subcellular location is the mitochondrion nucleoid. Its function is as follows. Binds to the mitochondrial light strand promoter and functions in mitochondrial transcription regulation. Component of the mitochondrial transcription initiation complex, composed at least of TFB2M, TFAM and POLRMT that is required for basal transcription of mitochondrial DNA. In this complex, TFAM recruits POLRMT to a specific promoter whereas TFB2M induces structural changes in POLRMT to enable promoter opening and trapping of the DNA non-template strand. Required for accurate and efficient promoter recognition by the mitochondrial RNA polymerase. Promotes transcription initiation from the HSP1 and the light strand promoter by binding immediately upstream of transcriptional start sites. Is able to unwind DNA. Bends the mitochondrial light strand promoter DNA into a U-turn shape via its HMG boxes. Required for maintenance of normal levels of mitochondrial DNA. May play a role in organizing and compacting mitochondrial DNA. The sequence is that of Transcription factor A, mitochondrial from Sus scrofa (Pig).